The sequence spans 350 residues: tRNA uridine(34) hydroxylase (350 aa).

The Rhodanese domain maps to 146–240; that stretch reads DDPDALFIDM…YARKAREQGL (95 aa). The Cysteine persulfide intermediate role is filled by C200.

This sequence belongs to the TrhO family.

The enzyme catalyses uridine(34) in tRNA + AH2 + O2 = 5-hydroxyuridine(34) in tRNA + A + H2O. Catalyzes oxygen-dependent 5-hydroxyuridine (ho5U) modification at position 34 in tRNAs, the first step in 5-carboxymethoxyuridine (cmo5U) biosynthesis. May be part of an alternate pathway, which is able to bypass cmo5U biogenesis in a subset of tRNAs under aerobic conditions. This Escherichia coli (strain SE11) protein is tRNA uridine(34) hydroxylase.